Here is a 359-residue protein sequence, read N- to C-terminus: MYHQNLISSTPNQNSNPHDWDIQNPLFSIHPSAEIPSKYPFMGITSCPNTNVFEEFQYKITNDQNFPTTYNTPFPVISEGISYNMHDVQENTMCGYTAHNQGLIIGCHEPVLVHAVVESQQFNVPQSEDINLVSQSERVTEDKVMFKTDHKKKDIIGKGQWTPTEDELLVRMVKSKGTKNWTSIAKMFQGRVGKQCRERWHNHLRPNIKKNDWSEEEDQILIEVHKIVGNKWTEIAKRLPGRSENIVKNHWNATKRRLHSVRTKRSDAFSPRNNALENYIRSITINNNALMNREVDSITANSEIDSTRCENIVDEVMNLNLHATTSVYVPEQAVLTWGYDFTKCYEPMDDTWMLMNGWN.

The segment covering 1–17 has biased composition (polar residues); that stretch reads MYHQNLISSTPNQNSNP. The tract at residues 1-21 is disordered; it reads MYHQNLISSTPNQNSNPHDWD. HTH myb-type domains are found at residues 153 to 208 and 209 to 259; these read KDII…RPNI and KKND…RRLH. 2 DNA-binding regions (H-T-H motif) span residues 181 to 204 and 232 to 255; these read WTSIAKMFQGRVGKQCRERWHNHL and WTEIAKRLPGRSENIVKNHWNATK.

As to expression, accumulates in reproductive organs (e.g. flowers and siliques). Expressed at very low levels in vegetative organs.

It localises to the nucleus. Transcription activator that recognizes the motif 5'-TAACGG-3' in the promoter of target genes. Promotes vegetative-to-embryonic transition and the formation of somatic embryos from root explants in a WUS-independent manner. Together with MYB118, activates the transcription of S-ACP-DES2/AAD2 and S-ACP-DES3/AAD3 thus promoting the biosynthesis of omega-7 monounsaturated fatty acid in seed endosperm. This chain is Transcription factor MYB115, found in Arabidopsis thaliana (Mouse-ear cress).